A 314-amino-acid chain; its full sequence is Deacetoxycephalosporin C synthase (314 aa).

Residues 156–269 (DCEPLLRLRY…RTSSVFFLRP (114 aa)) form the Fe2OG dioxygenase domain.

This sequence belongs to the iron/ascorbate-dependent oxidoreductase family. It depends on Fe cation as a cofactor. The cofactor is L-ascorbate.

It catalyses the reaction penicillin N + 2-oxoglutarate + O2 = deacetoxycephalosporin C + succinate + CO2 + H2O. It functions in the pathway antibiotic biosynthesis; cephalosporin C biosynthesis. Functionally, catalyzes the step from penicillin N to deacetoxy-cephalosporin C. The polypeptide is Deacetoxycephalosporin C synthase (cefE) (Amycolatopsis lactamdurans (Nocardia lactamdurans)).